The following is a 502-amino-acid chain: ATP synthase subunit alpha (502 aa).

The interval 115 to 135 (VDGLGPINTTNTRPIESPAPG) is disordered. Residue 169 to 176 (GDRQTGKT) participates in ATP binding.

This sequence belongs to the ATPase alpha/beta chains family. F-type ATPases have 2 components, CF(1) - the catalytic core - and CF(0) - the membrane proton channel. CF(1) has five subunits: alpha(3), beta(3), gamma(1), delta(1), epsilon(1). CF(0) has three main subunits: a(1), b(2) and c(9-12). The alpha and beta chains form an alternating ring which encloses part of the gamma chain. CF(1) is attached to CF(0) by a central stalk formed by the gamma and epsilon chains, while a peripheral stalk is formed by the delta and b chains.

Its subcellular location is the cell membrane. It carries out the reaction ATP + H2O + 4 H(+)(in) = ADP + phosphate + 5 H(+)(out). In terms of biological role, produces ATP from ADP in the presence of a proton gradient across the membrane. The alpha chain is a regulatory subunit. The sequence is that of ATP synthase subunit alpha from Bacillus cereus (strain B4264).